The following is a 261-amino-acid chain: Ribosome biogenesis protein nsa2 (261 aa).

Composition is skewed to basic and acidic residues over residues 1–36 and 66–82; these read MPQN…HKQS and KQHE…EKDP. Disordered regions lie at residues 1–44 and 64–97; these read MPQN…NLRG and AIKQ…SNPT. Residues 15–22 carry the Nuclear localization signal motif; the sequence is GKRLDTEE.

This sequence belongs to the eukaryotic ribosomal protein eS8 family. Ribosome biogenesis protein NSA2 subfamily. In terms of assembly, component of the pre-66S ribosomal particle. Interacts with nop7 and rrp1. Interacts with rsa4 (via WD repeats).

It is found in the nucleus. The protein localises to the nucleolus. Involved in the biogenesis of the 60S ribosomal subunit. May play a part in the quality control of pre-60S particles. This is Ribosome biogenesis protein nsa2 (rbg-52) from Neurospora crassa (strain ATCC 24698 / 74-OR23-1A / CBS 708.71 / DSM 1257 / FGSC 987).